The primary structure comprises 1146 residues: MARHDEAKAGGLFDRIGNFVVRWPLIVIGCWIAVAAALTLLLPTLQAQAAKREQAPLPPGAPSMVLQKEMSAAFQEKIETSALLLVLLTNENGLGPADEAVYRKLIENLRADTQDKISVQDFLAVPEMKELLASKDNKAWNLPITFAGDAASPETQAAFKRVAAIVKQTVAGTSLTVHLSGPIATVADLTELGEKDVRIIEIGTAVSVLIILILVYRNLVTMLVPLATIGASVVTAQGTLSGLAEFGLAVNMQAIVFMSAVMIGAGTDYAVFLISRYHDYVRHGEKSDMAVKKALMSIGKVITASAATVAVTFLAMVFTKLEVFSAVGPAIAVAITVSLLGAVTLLPAILTLTGRRGWIKPRRDLTSRMWRRSGVRIVRRSTIHLVGSLIVLVALAGCTLLIRFNYDDLKTVPQHVESVKGYEAMNRHFPMNAMTPMVLFIKSPRDLRTPGALADIEMMSREIAELPNIVMVRGLTRPNGEPLKETKVSFQAGEVGGKLDEATTLLEEHGGELDQLTGGAHQLADALAQIRNEINGAVASSSGIVNTLQAMMDLMGGDKTIRQLENASQYVGRMRALGDNLSGTVTDAEQIATWASPMVNALNSSPVCNSDPACRTSRAQLAAIVQAQDDGLLRSIRALAVTLQQTQEYQTLARTVSTLDGQLKQVVSTLKAVDGLPTKLAQMQQGANALADGSAALAAGVQELVDQVKKMGSGLNEAADFLLGIKRDADKPSMAGFNIPPQIFSRDEFKKGAQIFLSADGHAARYFVQSALNPATTEAMDQVNDILRVADSARPNTELEDATIGLAGVPTALRDIRDYYNSDMKFIVIATIVIVFLILVILLRALVAPIYLIGSVLISYLSALGIGTLVFQLILGQEMHWSLPGLSFILLVAIGADYNMLLISRIRDESPHGIRIGVIRTVGSTGGVITSAGLIFAASMFGLVGASINTMAQAGFTIGIGIVLDTFLVRTVTVPALTTMIGRANWWPSELGRDPSTPPTKADRWLRRVKGHRRKAPIPAPKPPHTKVVRNTNGHASKAATKSVPNGKPADLAEGNGEYLIDHLRRHSLPLFGYAAMPAYDVVDGVSKPNGDGAHIGKEPVDHLLGHSLPLFGLAGLPSYDRWDDTSIGEPAVGHAGSKPDAKLST.

The next 11 helical transmembrane spans lie at 25 to 45, 206 to 226, 254 to 274, 298 to 318, 330 to 350, 382 to 402, 826 to 846, 850 to 870, 883 to 903, 928 to 948, and 949 to 969; these read LIVI…LPTL, VSVL…LVPL, AIVF…VFLI, IGKV…AMVF, AIAV…PAIL, TIHL…TLLI, FIVI…LRAL, IYLI…GTLV, LPGL…MLLI, VITS…GASI, and NTMA…TFLV.

The protein belongs to the resistance-nodulation-cell division (RND) (TC 2.A.6) family. MmpL subfamily.

Its subcellular location is the cell membrane. In Mycobacterium tuberculosis (strain CDC 1551 / Oshkosh), this protein is Probable transport protein MmpL12 (mmpL12).